The sequence spans 501 residues: Neuronal acetylcholine receptor subunit beta-2 (501 aa).

The first 25 residues, 1 to 25, serve as a signal peptide directing secretion; the sequence is MARCSNSMALLFSFGLLWLCSGVLG. The Extracellular portion of the chain corresponds to 26 to 238; the sequence is TDTEERLVEH…IIRRKPLFYT (213 aa). 2 N-linked (GlcNAc...) asparagine glycosylation sites follow: N51 and N168. C155 and C169 are disulfide-bonded. A helical transmembrane segment spans residues 239–259; it reads INLIIPCVLITSLAILVFYLP. Residues 260–267 are Cytoplasmic-facing; that stretch reads SDCGEKMT. A helical transmembrane segment spans residues 268 to 288; that stretch reads LCISVLLALTVFLLLISKIVP. Over 289–300 the chain is Extracellular; sequence PTSLDVPLVGKY. The chain crosses the membrane as a helical span at residues 301–321; sequence LMFTMVLVTFSIVTSVCVLNV. Over 322-459 the chain is Cytoplasmic; it reads HHRSPTTHTM…WKYVAMVIDR (138 aa). The helical transmembrane segment at 460–480 threads the bilayer; sequence LFLWIFVFVCVFGTIGMFLQP.

This sequence belongs to the ligand-gated ion channel (TC 1.A.9) family. Acetylcholine receptor (TC 1.A.9.1) subfamily. Beta-2/CHRNB2 sub-subfamily. In terms of assembly, neuronal AChR is a heteropentamer composed of two different types of subunits: alpha and beta. CHRNB2/Beta-2 subunit can be combined to CHRNA2/alpha-2, CHRNA3/alpha-3 or CHRNA4/alpha-4, CHRNA5/alpha-5, CHRNA6/alpha-6 and CHRNB3/beta-3 to give rise to functional receptors. CHRNA2:CHRNB2 and CHRNA4:CHRNB2 nAChR complexes exist in two subtypes: LS (low agonist sensitivity) with a (CHRNA2/4)3:(CHRNB2)2 and HS (high agonist sensitivity) with a (CHRNA2/4)2:(CHRNB2)3 stoichiometry; the subtypes differ in their subunit binding interfaces which are involved in ligand binding. Cells produce predominantly an (CHRNA4)3:(CHRNB2)2 nAChR. The stoichiometric form (CHRNA4)2:(CHRNB2)3 expression is selectively up-regulated by nicotine and has lower single channel conductance and calcium permeability. Also part of the stoichiometric forms: (CHRNA4:CHRNB2)2:CHRNB3 or (CHRNA6:CHRNB2)2:CHRNB3. Can form heteropentamers with CHRNA7, mainly found in basal forebrain cholinergic neurons. Interacts with RIC3; which is required for proper folding and assembly. Interacts with LYPD6.

The protein resides in the synaptic cell membrane. It is found in the cell membrane. The enzyme catalyses K(+)(in) = K(+)(out). The catalysed reaction is Na(+)(in) = Na(+)(out). It carries out the reaction Ca(2+)(in) = Ca(2+)(out). Its activity is regulated as follows. Activated by a myriad of ligands such as acetylcholine, cytisine, nicotine, choline and epibatidine. Channel potentiation by calcium is stoichiometry-selective, CHRNA4:CHRNB2 nACh receptor is achieved by calcium association with topographically distinct sites framed by anionic residues within the CHRNA4 subunit and between the CHRNA4 and CHRNB2 subunits. Oligomeric amyloid-beta protein 42 activates specifially CHRNA7:CHRNB2 nAchRs. nAChR activity is inhibited by the antagonist alpha-conotoxins BuIA, PnIA, PnIC, GID and MII, small disulfide-constrained peptides from cone snails. In terms of biological role, component of neuronal acetylcholine receptors (nAChRs) that function as pentameric, ligand-gated cation channels with high calcium permeability among other activities. nAChRs are excitatory neurotrasnmitter receptors formed by a collection of nAChR subunits known to mediate synaptic transmission in the nervous system and the neuromuscular junction. Each nAchR subunit confers differential attributes to channel properties, including activation, deactivation and desensitization kinetics, pH sensitivity, cation permeability, and binding to allosteric modulators. CHRNB2 forms heteropentameric neuronal acetylcholine receptors with CHRNA2, CHRNA3, CHRNA4 and CHRNA6, as well as CHRNA5 and CHRNB3 as accesory subunits. Found in two major stoichiometric forms,(CHRNA4)3:(CHRNB2)2 and (CHRNA4)2:(CHRNB2)3, the two stoichiometric forms differ in their unitary conductance, calcium permeability, ACh sensitivity and potentiation by divalent cation. Heteropentameric channels with CHRNA6 and CHRNA4 exhibit high sensitivity to ACh and nicotine and are predominantly expressed in only a few brain areas, including dopaminergic neurons, norepirephrine neurons and cells of the visual system. nAChrs containing CHRNA6 subunits mediate endogenous cholinergic modulation of dopamine and gamma-aminobutyric acid (GABA) release in response to nicotine at nerve terminals. Also forms functional nAChRs with other subunits such as CHRNA7:CHRNB2, mainly expressed in basal forebrain cholinergic neurons. This chain is Neuronal acetylcholine receptor subunit beta-2 (Chrnb2), found in Mus musculus (Mouse).